We begin with the raw amino-acid sequence, 268 residues long: 4-hydroxy-tetrahydrodipicolinate reductase (268 aa).

NAD(+) is bound by residues 10 to 15 (GASGRM) and D36. Residue R37 participates in NADP(+) binding. NAD(+)-binding positions include 99-101 (GTT) and 123-126 (SANM). The active-site Proton donor/acceptor is H156. H157 is a binding site for (S)-2,3,4,5-tetrahydrodipicolinate. K160 acts as the Proton donor in catalysis. 166–167 (GT) contributes to the (S)-2,3,4,5-tetrahydrodipicolinate binding site.

This sequence belongs to the DapB family.

The protein localises to the cytoplasm. The enzyme catalyses (S)-2,3,4,5-tetrahydrodipicolinate + NAD(+) + H2O = (2S,4S)-4-hydroxy-2,3,4,5-tetrahydrodipicolinate + NADH + H(+). The catalysed reaction is (S)-2,3,4,5-tetrahydrodipicolinate + NADP(+) + H2O = (2S,4S)-4-hydroxy-2,3,4,5-tetrahydrodipicolinate + NADPH + H(+). Its pathway is amino-acid biosynthesis; L-lysine biosynthesis via DAP pathway; (S)-tetrahydrodipicolinate from L-aspartate: step 4/4. Catalyzes the conversion of 4-hydroxy-tetrahydrodipicolinate (HTPA) to tetrahydrodipicolinate. This is 4-hydroxy-tetrahydrodipicolinate reductase from Burkholderia pseudomallei (strain 1710b).